Here is a 266-residue protein sequence, read N- to C-terminus: uncharacterized protein (266 aa).

The next 8 membrane-spanning stretches (helical) occupy residues 9-29, 37-57, 69-89, 123-143, 153-173, 184-204, 216-236, and 246-266; these read IAAL…LFIF, TMPH…LVFY, LIKV…ISLL, FLLM…MIFT, YNPF…LVIA, LPLA…LFLL, SVFA…ILIL, and TNSL…MVFV.

The protein localises to the cell membrane. This is an uncharacterized protein from Haemophilus influenzae (strain ATCC 51907 / DSM 11121 / KW20 / Rd).